The chain runs to 324 residues: Transcription factor TCP24 (324 aa).

The TCP domain occupies 50-108; the sequence is GKDRHSKVLTSKGLRDRRIRLSVATAIQFYDLQDRLGFDQPSKAVEWLINAASDSITDL. Disordered stretches follow at residues 122–215 and 261–297; these read QNQT…PMNH and QRSSISSSSSSSSPMDSQSISFFMATPPPLDHHNHQL. A compositionally biased stretch (low complexity) spans 127–142; sequence SACSSGTSESSLLSLS. The region spanning 144–162 is the R domain; sequence TEIRGKARERARERTAKDR. A compositionally biased stretch (basic and acidic residues) spans 144–167; the sequence is TEIRGKARERARERTAKDRDKDLQ. Composition is skewed to polar residues over residues 168–192 and 200–212; these read NAHSSFTQLLTGGFDQQPSNRNWTG and VQLQIPNSSSQEP. A compositionally biased stretch (low complexity) spans 261–281; sequence QRSSISSSSSSSSPMDSQSIS.

Forms a heterodimeric complex with ABAP1. Interacts with SPL. In terms of tissue distribution, expressed in cotyledons, particularly in the vascular region, in leaves, roots, stems, buds, flowers and siliques.

The protein localises to the nucleus. In terms of biological role, plays a pivotal role in the control of morphogenesis of shoot organs by negatively regulating the expression of boundary-specific genes such as CUC genes, probably through the induction of miRNA (e.g. miR164). In association with ABAP1, exerts a negative role in cell proliferation in leaves, possibly by inhibiting mitotic DNA replication. Participates in ovule development. The polypeptide is Transcription factor TCP24 (TCP24) (Arabidopsis thaliana (Mouse-ear cress)).